The primary structure comprises 269 residues: MFDLTGKNVCYVADCGGIALETCKVLMTKNIAKLAILHSVENPQAIAQLQSLKPSTQIFFWTYDVTMARADMQKYFDEVMVQMDYIDVLIYGATLCDETDIDGTINTNLTGMMNTCATVLPHMDKKKDGSGGLILNVTSVIGLDPSPVFCAYSASKFGVIGFTRSLADPLYYTQNGVAVMAVCCGPTKVFVDRELTAFLPYGQSFADRLRTAPCQSTAVCGQNIVRAIERGENGQIWIADKGGLELVKLQSYWHMADVFLHYMQDKEDD.

An NAD(+)-binding site is contributed by 11 to 34 (YVADCGGIALETCKVLMTKNIAKL). S139 serves as a coordination point for substrate. Residue Y152 is the Proton acceptor of the active site.

This sequence belongs to the short-chain dehydrogenases/reductases (SDR) family.

The polypeptide is Alcohol dehydrogenase-related 31 kDa protein (Adhr) (Drosophila lebanonensis (Fruit fly)).